We begin with the raw amino-acid sequence, 350 residues long: Thioredoxin-like fold domain-containing protein MRL7L, chloroplastic (350 aa).

The transit peptide at 1–48 directs the protein to the chloroplast; that stretch reads MILPFSTQFTCPVQDNGFSPSSLLSHCKRDRFEVTSLRYDSFGSVKTA. Disordered stretches follow at residues 78 to 107 and 182 to 201; these read KKEE…LDDP and NEKK…DSEK. 2 stretches are compositionally biased toward acidic residues: residues 82–93 and 186–200; these read DSDSEDEEDEVK and EEED…DDSE.

It is found in the plastid. The protein resides in the chloroplast stroma. The protein localises to the nucleus. Functionally, plays an essential role in early steps of chloroplast development. Involved in the regulation of plastid gene expression. Required for the proper function of the plastid transcriptional machinery and protein accumulation in thylakoid membranes. May function as molecular chaperone to ensure proper organization of the nucleoids in chloroplasts. Is a necessary component of phytochrome signaling for photosynthesis-associated plastid-encoded genes (PhAPGs) activation. Mediates the degradation of two repressors of chloroplast biogenesis, PIF1 and PIF3 in nucleus. Promotes the assembly of the plastid-encoded RNA polymerase (PEP) complex for PhAPG transcription in plastids. The polypeptide is Thioredoxin-like fold domain-containing protein MRL7L, chloroplastic (Arabidopsis thaliana (Mouse-ear cress)).